Here is a 214-residue protein sequence, read N- to C-terminus: Adenylate kinase (214 aa).

ATP is bound at residue 10–15 (GAGKGT). The interval 30–59 (STGDMFRDHKARGTELGKTVQAIMDAGGLV) is NMP. AMP contacts are provided by residues Thr-31, Arg-36, 57 to 59 (GLV), 85 to 88 (GYPR), and Gln-92. The LID stretch occupies residues 126–163 (GRRSCPKCGAVYHVSANPPRRMGYCDRDDAGLVQRDDD). Arg-127 is an ATP binding site. 2 residues coordinate Zn(2+): Cys-130 and Cys-133. 136–137 (VY) contributes to the ATP binding site. Zn(2+) contacts are provided by Cys-150 and Asp-153. 2 residues coordinate AMP: Arg-160 and Arg-171. Gly-199 contacts ATP.

Belongs to the adenylate kinase family. As to quaternary structure, monomer.

The protein resides in the cytoplasm. The enzyme catalyses AMP + ATP = 2 ADP. The protein operates within purine metabolism; AMP biosynthesis via salvage pathway; AMP from ADP: step 1/1. Functionally, catalyzes the reversible transfer of the terminal phosphate group between ATP and AMP. Plays an important role in cellular energy homeostasis and in adenine nucleotide metabolism. The polypeptide is Adenylate kinase (Anaeromyxobacter sp. (strain Fw109-5)).